A 178-amino-acid chain; its full sequence is Large ribosomal subunit protein uL6 (178 aa).

The protein belongs to the universal ribosomal protein uL6 family. In terms of assembly, part of the 50S ribosomal subunit.

Functionally, this protein binds to the 23S rRNA, and is important in its secondary structure. It is located near the subunit interface in the base of the L7/L12 stalk, and near the tRNA binding site of the peptidyltransferase center. The chain is Large ribosomal subunit protein uL6 from Streptococcus mutans serotype c (strain ATCC 700610 / UA159).